An 86-amino-acid chain; its full sequence is UPF0437 protein Ava_4254 (86 aa).

This sequence belongs to the UPF0437 family.

This is UPF0437 protein Ava_4254 from Trichormus variabilis (strain ATCC 29413 / PCC 7937) (Anabaena variabilis).